Here is a 511-residue protein sequence, read N- to C-terminus: V-type proton ATPase subunit B, brain isoform (511 aa).

Arg400 provides a ligand contact to ATP.

This sequence belongs to the ATPase alpha/beta chains family. In terms of assembly, V-ATPase is a heteromultimeric enzyme made up of two complexes: the ATP-hydrolytic V1 complex and the proton translocation V0 complex. The V1 complex consists of three catalytic AB heterodimers that form a heterohexamer, three peripheral stalks each consisting of EG heterodimers, one central rotor including subunits D and F, and the regulatory subunits C and H. The proton translocation complex V0 consists of the proton transport subunit a, a ring of proteolipid subunits c9c'', rotary subunit d, subunits e and f, and the accessory subunits ATP6AP1/Ac45 and ATP6AP2/PRR. In terms of tissue distribution, kidney; localizes to early distal nephron, encompassing thick ascending limbs and distal convoluted tubules (at protein level).

It localises to the apical cell membrane. Its subcellular location is the melanosome. The protein resides in the cytoplasm. It is found in the cytoplasmic vesicle. The protein localises to the secretory vesicle. It localises to the synaptic vesicle membrane. Its subcellular location is the clathrin-coated vesicle membrane. Its function is as follows. Non-catalytic subunit of the V1 complex of vacuolar(H+)-ATPase (V-ATPase), a multisubunit enzyme composed of a peripheral complex (V1) that hydrolyzes ATP and a membrane integral complex (V0) that translocates protons. V-ATPase is responsible for acidifying and maintaining the pH of intracellular compartments and in some cell types, is targeted to the plasma membrane, where it is responsible for acidifying the extracellular environment. In renal intercalated cells, can partially compensate the lack of ATP6V1B1 and mediate secretion of protons (H+) into the urine under base-line conditions but not in conditions of acid load. The protein is V-type proton ATPase subunit B, brain isoform (ATP6V1B2) of Homo sapiens (Human).